Here is an 86-residue protein sequence, read N- to C-terminus: Large ribosomal subunit protein uL30m (86 aa).

Residues 67-86 (QQRELRKSNPGFIVEKRTID) form a disordered region.

The protein belongs to the universal ribosomal protein uL30 family. As to quaternary structure, component of the mitochondrial large ribosomal subunit (mt-LSU). Mature yeast 74S mitochondrial ribosomes consist of a small (37S) and a large (54S) subunit. The 37S small subunit contains a 15S ribosomal RNA (15S mt-rRNA) and 34 different proteins. The 54S large subunit contains a 21S rRNA (21S mt-rRNA) and 46 different proteins.

It is found in the mitochondrion. In terms of biological role, component of the mitochondrial ribosome (mitoribosome), a dedicated translation machinery responsible for the synthesis of mitochondrial genome-encoded proteins, including at least some of the essential transmembrane subunits of the mitochondrial respiratory chain. The mitoribosomes are attached to the mitochondrial inner membrane and translation products are cotranslationally integrated into the membrane. This chain is Large ribosomal subunit protein uL30m (MRPL33), found in Saccharomyces cerevisiae (strain ATCC 204508 / S288c) (Baker's yeast).